The following is a 175-amino-acid chain: Adenine phosphoribosyltransferase (175 aa).

The protein belongs to the purine/pyrimidine phosphoribosyltransferase family. In terms of assembly, homodimer.

It is found in the cytoplasm. It carries out the reaction AMP + diphosphate = 5-phospho-alpha-D-ribose 1-diphosphate + adenine. The protein operates within purine metabolism; AMP biosynthesis via salvage pathway; AMP from adenine: step 1/1. Its function is as follows. Catalyzes a salvage reaction resulting in the formation of AMP, that is energically less costly than de novo synthesis. The chain is Adenine phosphoribosyltransferase from Maricaulis maris (strain MCS10) (Caulobacter maris).